Reading from the N-terminus, the 314-residue chain is Zinc-binding alcohol dehydrogenase domain-containing protein cipB (314 aa).

It belongs to the zinc-containing alcohol dehydrogenase family.

Involved in osmoadaptation. This is Zinc-binding alcohol dehydrogenase domain-containing protein cipB (cipB) from Emericella nidulans (strain FGSC A4 / ATCC 38163 / CBS 112.46 / NRRL 194 / M139) (Aspergillus nidulans).